Reading from the N-terminus, the 178-residue chain is Probable inosine/xanthosine triphosphatase (178 aa).

This sequence belongs to the YjjX NTPase family. In terms of assembly, homodimer. It depends on Mg(2+) as a cofactor. Mn(2+) serves as cofactor.

It carries out the reaction XTP + H2O = XDP + phosphate + H(+). The catalysed reaction is ITP + H2O = IDP + phosphate + H(+). Functionally, phosphatase that hydrolyzes non-canonical purine nucleotides such as XTP and ITP to their respective diphosphate derivatives. Probably excludes non-canonical purines from DNA/RNA precursor pool, thus preventing their incorporation into DNA/RNA and avoiding chromosomal lesions. In Pyrobaculum aerophilum (strain ATCC 51768 / DSM 7523 / JCM 9630 / CIP 104966 / NBRC 100827 / IM2), this protein is Probable inosine/xanthosine triphosphatase.